The sequence spans 225 residues: Uridylate kinase (225 aa).

7–11 provides a ligand contact to ATP; sequence KISGS. Residue Gly-44 coordinates UMP. ATP contacts are provided by Gly-45 and Arg-49. UMP is bound by residues Asp-66 and 114–120; that span reads FQPGQST. ATP contacts are provided by Tyr-147 and Glu-150.

This sequence belongs to the UMP kinase family. Homohexamer.

It localises to the cytoplasm. It catalyses the reaction UMP + ATP = UDP + ADP. The protein operates within pyrimidine metabolism; CTP biosynthesis via de novo pathway; UDP from UMP (UMPK route): step 1/1. Inhibited by UTP. Its function is as follows. Catalyzes the reversible phosphorylation of UMP to UDP. The polypeptide is Uridylate kinase (Aeropyrum pernix (strain ATCC 700893 / DSM 11879 / JCM 9820 / NBRC 100138 / K1)).